The chain runs to 111 residues: 4'-hydroxy-3'-methoxypropiophenone carrier protein ppsC (111 aa).

The tract at residues 1–21 (MSAQVMRPGTPQHEGQEFLSG) is disordered.

It functions in the pathway secondary metabolite biosynthesis. In terms of biological role, 4'-hydroxy-3'-methoxypropiophenone carrier protein; part of the gene cluster that mediates the biosynthesis of 2,4'-dihydroxy-3'-methoxypropiophenone. The first step of the pathway is the conversion of acetate into acetyl-CoA by the acyl-CoA ligase ppsA. Acetyl-CoA is then used as a starter unit by the polyketide synthase ppsB and condensed with 4 malonyl-CoA unit to produce the pentaketide backbone. During polyketide extension, the polykedite chain is probably reduced and dehydrated by the KR and PT domains, respectively. O-methylation seems to be catalyzed by an unknown methyltransferase rather than by the CMeT domain of ppsB. Two hydroxylations and one further decarboxylation step catalyzed by yet unknown enzymes are then required to yield 4'-hydroxy-3'-methoxypropiophenone. PpsC functions as a carrier protein to transport 4'-hydroxy-3'-methoxypropiophenone to a specific cell compartment in which 4'-hydroxy-3'-methoxypropiophenone is hydroxylated to 2,4'-dihydroxy-3'-methoxypropiophenone by a still to be identified enzyme. The sequence is that of 4'-hydroxy-3'-methoxypropiophenone carrier protein ppsC from Aspergillus oryzae (strain ATCC 42149 / RIB 40) (Yellow koji mold).